The sequence spans 664 residues: Glycine--tRNA ligase beta subunit (664 aa).

The protein belongs to the class-II aminoacyl-tRNA synthetase family. In terms of assembly, tetramer of two alpha and two beta subunits.

The protein localises to the cytoplasm. It carries out the reaction tRNA(Gly) + glycine + ATP = glycyl-tRNA(Gly) + AMP + diphosphate. This is Glycine--tRNA ligase beta subunit from Rickettsia conorii (strain ATCC VR-613 / Malish 7).